The chain runs to 218 residues: Ribonuclease HII (218 aa).

Positions 13-202 (DLVAGVDEVG…VRAAHEARAT (190 aa)) constitute an RNase H type-2 domain. 3 residues coordinate a divalent metal cation: aspartate 19, glutamate 20, and aspartate 111.

It belongs to the RNase HII family. Mn(2+) is required as a cofactor. Requires Mg(2+) as cofactor.

It is found in the cytoplasm. The enzyme catalyses Endonucleolytic cleavage to 5'-phosphomonoester.. Endonuclease that specifically degrades the RNA of RNA-DNA hybrids. The chain is Ribonuclease HII from Pseudomonas syringae pv. syringae (strain B728a).